The following is a 223-amino-acid chain: UPF0502 protein Sde_2426 (223 aa).

The protein belongs to the UPF0502 family.

This chain is UPF0502 protein Sde_2426, found in Saccharophagus degradans (strain 2-40 / ATCC 43961 / DSM 17024).